A 272-amino-acid polypeptide reads, in one-letter code: Ethanolamine ammonia-lyase small subunit (272 aa).

The adenosylcob(III)alamin site is built by Val161, Glu182, and Cys211.

It belongs to the EutC family. As to quaternary structure, the basic unit is a heterodimer which dimerizes to form tetramers. The heterotetramers trimerize; 6 large subunits form a core ring with 6 small subunits projecting outwards. It depends on adenosylcob(III)alamin as a cofactor.

It localises to the bacterial microcompartment. It carries out the reaction ethanolamine = acetaldehyde + NH4(+). It functions in the pathway amine and polyamine degradation; ethanolamine degradation. Functionally, catalyzes the deamination of various vicinal amino-alcohols to oxo compounds. Allows this organism to utilize ethanolamine as the sole source of nitrogen and carbon in the presence of external vitamin B12. The sequence is that of Ethanolamine ammonia-lyase small subunit from Xanthomonas campestris pv. campestris (strain ATCC 33913 / DSM 3586 / NCPPB 528 / LMG 568 / P 25).